The sequence spans 163 residues: UPF0523 protein B (163 aa).

The protein belongs to the UPF0523 family.

The polypeptide is UPF0523 protein B (Dictyostelium discoideum (Social amoeba)).